The following is a 137-amino-acid chain: Large ribosomal subunit protein bL17 (137 aa).

The protein belongs to the bacterial ribosomal protein bL17 family. In terms of assembly, part of the 50S ribosomal subunit. Contacts protein L32.

This Bradyrhizobium sp. (strain ORS 278) protein is Large ribosomal subunit protein bL17.